The sequence spans 345 residues: S-adenosylmethionine:tRNA ribosyltransferase-isomerase (345 aa).

The protein belongs to the QueA family. In terms of assembly, monomer.

It is found in the cytoplasm. It catalyses the reaction 7-aminomethyl-7-carbaguanosine(34) in tRNA + S-adenosyl-L-methionine = epoxyqueuosine(34) in tRNA + adenine + L-methionine + 2 H(+). It functions in the pathway tRNA modification; tRNA-queuosine biosynthesis. In terms of biological role, transfers and isomerizes the ribose moiety from AdoMet to the 7-aminomethyl group of 7-deazaguanine (preQ1-tRNA) to give epoxyqueuosine (oQ-tRNA). In Azoarcus sp. (strain BH72), this protein is S-adenosylmethionine:tRNA ribosyltransferase-isomerase.